The sequence spans 184 residues: GTP-binding protein Rheb (184 aa).

Lysine 8 is covalently cross-linked (Glycyl lysine isopeptide (Lys-Gly) (interchain with G-Cter in ubiquitin)). Positions 16 and 17 each coordinate GDP. Serine 16 is a binding site for GTP. GTP is bound by residues glycine 18, lysine 19, serine 20, serine 21, valine 32, tyrosine 35, threonine 38, asparagine 119, and aspartate 122. GDP contacts are provided by lysine 19, serine 20, and serine 21. Position 20 (serine 20) interacts with Mg(2+). An Effector region motif is present at residues 35-43; sequence YDPTIENTF. Threonine 38 serves as a coordination point for GDP. Mg(2+) is bound at residue threonine 38. Aspartate 122 serves as a coordination point for GDP. At serine 130 the chain carries Phosphoserine; by MAPKAPK5. Alanine 150 lines the GDP pocket. Alanine 150 is a binding site for GTP. Cysteine 181 carries the cysteine methyl ester modification. Cysteine 181 carries S-farnesyl cysteine lipidation. Positions 182-184 are cleaved as a propeptide — removed in mature form; sequence SVM.

The protein belongs to the small GTPase superfamily. Rheb family. Associates with the mTORC1 complex (MTOR, MLST8 and RPTOR) in a guanyl nucleotide-independent manner. Interacts with TSC2. Interacts with MCRS1; the interaction maintains RHEB at the lysosome in its active GTP-bound form and prevents its interaction with the mTORC1 complex inhibitor TSC2, ensuring activation of the mTORC1 complex by RHEB. Interacts (when prenylated) with PDE6D; this promotes release from membranes. Farnesylation is important for efficiently activating mTORC1-mediated signaling. Post-translationally, polyubiquitinated in response to amino acid, promoting its interaction with MTOR and mTORC1 activation. Deubiquitination by ATXN3 promotes recruitment of the TSC-TBC complex and RHEB inactivation by TSC2. Monoubiquitinated at Lys-8 by RNF152, promoting its association with the TSC-TBC complex. Deubiquitinated at Lys-8 by USP4, promoting mTORC1 activation. In terms of processing, phosphorylation by MAPKAPK5 impairs GTP-binding and inactivation. As to expression, expressed at high levels in normal adult cortex as well as a number of peripheral tissues, including lung and intestine.

It localises to the endomembrane system. It is found in the lysosome membrane. The protein localises to the golgi apparatus membrane. The protein resides in the endoplasmic reticulum membrane. Its subcellular location is the cytoplasm. It localises to the cytosol. It carries out the reaction GTP + H2O = GDP + phosphate + H(+). With respect to regulation, alternates between an inactive form bound to GDP and an active form bound to GTP. Inactivated by the TSC-TBC complex via the GTPase activating protein (GAP) domain of TSC2. Autoinhibited by Tyr-35, which constrains the active site conformation, restricting the access of the catalytic Asp-65 to the nucleotide-binding pocket. In terms of biological role, small GTPase that acts as an allosteric activator of the canonical mTORC1 complex, an evolutionarily conserved central nutrient sensor that stimulates anabolic reactions and macromolecule biosynthesis to promote cellular biomass generation and growth. In response to nutrients, growth factors or amino acids, specifically activates the protein kinase activity of MTOR, the catalytic component of the mTORC1 complex: acts by causing a conformational change that allows the alignment of residues in the active site of MTOR, thereby enhancing the phosphorylation of ribosomal protein S6 kinase (RPS6KB1 and RPS6KB2) and EIF4EBP1 (4E-BP1). RHEB is also required for localization of the TSC-TBC complex to lysosomal membranes. In response to starvation, RHEB is inactivated by the TSC-TBC complex, preventing activation of mTORC1. Has low intrinsic GTPase activity. This Rattus norvegicus (Rat) protein is GTP-binding protein Rheb.